The primary structure comprises 125 residues: Translation initiation factor 5A (125 aa).

The residue at position 35 (lysine 35) is a Hypusine.

Belongs to the eIF-5A family.

The protein localises to the cytoplasm. Its function is as follows. Functions by promoting the formation of the first peptide bond. The protein is Translation initiation factor 5A (eIF5A) of Methanoculleus marisnigri (strain ATCC 35101 / DSM 1498 / JR1).